Reading from the N-terminus, the 88-residue chain is MIKNAFISFQEQKEESRGSVEFQVFSFTNKIRRLTSHLELHRKDYLSQRGLRKILGKRQRLLAYLSKKNRVRYKELINQLNIRELKTR.

The protein belongs to the universal ribosomal protein uS15 family. In terms of assembly, part of the 30S ribosomal subunit.

Its subcellular location is the plastid. It localises to the chloroplast. The chain is Small ribosomal subunit protein uS15c (rps15) from Crucihimalaya wallichii (Rock-cress).